A 267-amino-acid polypeptide reads, in one-letter code: Integral membrane protein 2C (267 aa).

At Thr37 the chain carries Phosphothreonine. A helical; Signal-anchor for type II membrane protein membrane pass occupies residues 55–75 (VGGVCYLSMGMVVLLMGLVFA). The region spanning 136-230 (FGGGDPADII…LCNGKDTYRL (95 aa)) is the BRICHOS domain. Cysteines 163 and 222 form a disulfide. An N-linked (GlcNAc...) asparagine glycan is attached at Asn169.

Belongs to the ITM2 family. As to quaternary structure, interacts with BACE1. Interacts with APP. Interacts with STMN2. In terms of processing, type I membrane-bound, as well as soluble, furin has a pre-eminent role in ITM2C proteolytic processing. PCSK7 and PCSK5 may also be involved although to a lesser extent. The soluble form of PCSK7 is incapable of processing ITM2C. Fails to undergo shedding by ADAM10 and intramembrane cleavage by SPPL2B.

Its subcellular location is the lysosome membrane. The protein localises to the cell membrane. Its function is as follows. Negative regulator of amyloid-beta peptide production. May inhibit the processing of APP by blocking its access to alpha- and beta-secretase. Binding to the beta-secretase-cleaved APP C-terminal fragment is negligible, suggesting that ITM2C is a poor gamma-secretase cleavage inhibitor. May play a role in TNF-induced cell death and neuronal differentiation. In Macaca fascicularis (Crab-eating macaque), this protein is Integral membrane protein 2C (ITM2C).